Reading from the N-terminus, the 408-residue chain is CinA-like protein (408 aa).

The protein belongs to the CinA family.

The sequence is that of CinA-like protein from Anaeromyxobacter dehalogenans (strain 2CP-1 / ATCC BAA-258).